The primary structure comprises 302 residues: Putative S-adenosyl-L-methionine-dependent methyltransferase MAB_4586c (302 aa).

S-adenosyl-L-methionine is bound by residues Asp122 and 151–152 (DL).

It belongs to the UPF0677 family.

Exhibits S-adenosyl-L-methionine-dependent methyltransferase activity. The polypeptide is Putative S-adenosyl-L-methionine-dependent methyltransferase MAB_4586c (Mycobacteroides abscessus (strain ATCC 19977 / DSM 44196 / CCUG 20993 / CIP 104536 / JCM 13569 / NCTC 13031 / TMC 1543 / L948) (Mycobacterium abscessus)).